A 431-amino-acid chain; its full sequence is Foot protein 1 variant 2 (431 aa).

The N-terminal stretch at 1 to 20 (MARNMNILTLFAVLLGSASA) is a signal peptide. Position 22 is a 3',4'-dihydroxyphenylalanine (Y22). At P33 the chain carries 4-hydroxyproline. The A-1; approximate repeat unit spans residues 41–50 (VPPPAWTAWK). Residues 41–270 (VPPPAWTAWK…APPPAWTAWK (230 aa)) form a 13 X 10 AA A-P-P-P-A-W-T-A-W-K region. 4 positions are modified to 7'-hydroxytryptophan: W46, W49, W56, and W59. C-linked (Man) hydroxytryptophan glycosylation is found at W46, W49, W56, and W59. The stretch at 51–60 (AHPPAWTAWK) is one A-2; approximate repeat. A B-1 repeat occupies 61–70 (ATPKPWTAWK). The segment at 61–310 (ATPKPWTAWK…ATPKPWTAWR (250 aa)) is 27 X 10 AA A-T-P-K-P-W-T-A-W-K. P65 bears the 4-hydroxyproline mark. C-linked (Man) tryptophan glycosylation occurs at W66. Position 69 is a 7'-hydroxytryptophan (W69). A glycan (C-linked (Man) hydroxytryptophan) is linked at W69. The A-3 repeat unit spans residues 71-80 (APPPAWTAWK). 3 positions are modified to 4-hydroxyproline: P72, P73, and P74. 2 positions are modified to 7'-hydroxytryptophan: W76 and W79. C-linked (Man) hydroxytryptophan glycans are attached at residues W76 and W79. A B-2 repeat occupies 81 to 90 (ATPKPWTAWK). A 4-hydroxyproline modification is found at P85. W86 carries C-linked (Man) tryptophan glycosylation. 7'-hydroxytryptophan is present on W89. A C-linked (Man) hydroxytryptophan glycan is attached at W89. One copy of the A-4; approximate repeat lies at 91-100 (APPPTWTAWK). A 4-hydroxyproline mark is found at P92, P93, and P94. A 7'-hydroxytryptophan mark is found at W96 and W99. C-linked (Man) hydroxytryptophan glycosylation is found at W96 and W99. The stretch at 101–110 (ATPKPWTAWK) is one B-3 repeat. The residue at position 105 (P105) is a 4-hydroxyproline. A C-linked (Man) tryptophan glycan is attached at W106. W109 carries the 7'-hydroxytryptophan modification. Residue W109 is glycosylated (C-linked (Man) hydroxytryptophan). One copy of the A-5; approximate repeat lies at 111-120 (APPPVWTAWK). 4-hydroxyproline is present on residues P112, P113, and P114. 2 positions are modified to 7'-hydroxytryptophan: W116 and W119. W116 and W119 each carry a C-linked (Man) hydroxytryptophan glycan. One copy of the B-4; approximate repeat lies at 121–130 (ATPKPRTAWK). Residue P125 is modified to 4-hydroxyproline. Residue W129 is modified to 7'-hydroxytryptophan. W129 carries C-linked (Man) hydroxytryptophan glycosylation. The stretch at 131-140 (APPPTWTAWK) is one A-6; approximate repeat. 4-hydroxyproline occurs at positions 132, 133, and 134. W136 and W139 each carry 7'-hydroxytryptophan. W136 and W139 each carry a C-linked (Man) hydroxytryptophan glycan. The B-5; approximate repeat unit spans residues 141 to 150 (AAPKPWTAWK). P145 carries the 4-hydroxyproline modification. W146 carries a C-linked (Man) tryptophan glycan. The residue at position 149 (W149) is a 7'-hydroxytryptophan. A C-linked (Man) hydroxytryptophan glycan is attached at W149. The stretch at 151–160 (ATPKPWTAWK) is one B-6 repeat. P155 bears the 4-hydroxyproline mark. W156 is a glycosylation site (C-linked (Man) tryptophan). At W159 the chain carries 7'-hydroxytryptophan. A C-linked (Man) hydroxytryptophan glycan is attached at W159. An A-7 repeat occupies 161 to 170 (APPPAWTAWK). 4-hydroxyproline occurs at positions 162, 163, and 164. A 7'-hydroxytryptophan mark is found at W166 and W169. C-linked (Man) hydroxytryptophan glycosylation is found at W166 and W169. One copy of the B-7 repeat lies at 171–180 (ATPKPWTAWK). A 4-hydroxyproline modification is found at P175. W176 is a glycosylation site (C-linked (Man) tryptophan). W179 is modified (7'-hydroxytryptophan). W179 carries a C-linked (Man) hydroxytryptophan glycan. Residues 181–190 (ATPKPWTAWK) form a B-8 repeat. P185 bears the 4-hydroxyproline mark. W186 carries a C-linked (Man) tryptophan glycan. W189 carries the 7'-hydroxytryptophan modification. The C-linked (Man) hydroxytryptophan glycan is linked to W189. The stretch at 191–200 (ATPKPWTAWK) is one B-9 repeat. At P195 the chain carries 4-hydroxyproline. A C-linked (Man) tryptophan glycan is attached at W196. W199 carries the 7'-hydroxytryptophan modification. A C-linked (Man) hydroxytryptophan glycan is attached at W199. The stretch at 201 to 210 (ATPKPWTVWK) is one B-10; approximate repeat. P205 carries the 4-hydroxyproline modification. W206 is a glycosylation site (C-linked (Man) tryptophan). At W209 the chain carries 7'-hydroxytryptophan. A C-linked (Man) hydroxytryptophan glycan is attached at W209. The stretch at 211–220 (ATPKPWTAWK) is one B-11 repeat. P215 carries the post-translational modification 4-hydroxyproline. C-linked (Man) tryptophan glycosylation is present at W216. W219 bears the 7'-hydroxytryptophan mark. W219 carries a C-linked (Man) hydroxytryptophan glycan. One copy of the A-8 repeat lies at 221–230 (APPPAWTAWK). Residues P222, P223, and P224 each carry the 4-hydroxyproline modification. 2 positions are modified to 7'-hydroxytryptophan: W226 and W229. W226 and W229 each carry a C-linked (Man) hydroxytryptophan glycan. One copy of the B-12 repeat lies at 231–240 (ATPKPWTAWK). The residue at position 235 (P235) is a 4-hydroxyproline. W236 carries C-linked (Man) tryptophan glycosylation. Position 239 is a 7'-hydroxytryptophan (W239). The C-linked (Man) hydroxytryptophan glycan is linked to W239. The A-9 repeat unit spans residues 241-250 (APPPAWTAWK). P242, P243, and P244 each carry 4-hydroxyproline. W246 and W249 each carry 7'-hydroxytryptophan. C-linked (Man) hydroxytryptophan glycosylation is found at W246 and W249. The B-13 repeat unit spans residues 251-260 (ATPKPWTAWK). A 4-hydroxyproline modification is found at P255. C-linked (Man) tryptophan glycosylation occurs at W256. The residue at position 259 (W259) is a 7'-hydroxytryptophan. A glycan (C-linked (Man) hydroxytryptophan) is linked at W259. An A-10 repeat occupies 261 to 270 (APPPAWTAWK). Residues P262, P263, and P264 each carry the 4-hydroxyproline modification. A 7'-hydroxytryptophan mark is found at W266 and W269. C-linked (Man) hydroxytryptophan glycans are attached at residues W266 and W269. Residues 271 to 280 (ATPKPWTAWK) form a B-14 repeat. P275 is subject to 4-hydroxyproline. C-linked (Man) tryptophan glycosylation occurs at W276. W279 bears the 7'-hydroxytryptophan mark. W279 carries C-linked (Man) hydroxytryptophan glycosylation. One copy of the B-15 repeat lies at 281–290 (ATPKPWTAWK). Residue P285 is modified to 4-hydroxyproline. A glycan (C-linked (Man) tryptophan) is linked at W286. W289 carries the 7'-hydroxytryptophan modification. The C-linked (Man) hydroxytryptophan glycan is linked to W289. Residues 291–300 (ATPKPWTAWK) form a B-16 repeat. P295 is modified (4-hydroxyproline). W296 carries C-linked (Man) tryptophan glycosylation. W299 carries the post-translational modification 7'-hydroxytryptophan. Residue W299 is glycosylated (C-linked (Man) hydroxytryptophan). A B-17; approximate repeat occupies 301–310 (ATPKPWTAWR). A 4-hydroxyproline modification is found at P305. W306 is a glycosylation site (C-linked (Man) tryptophan). The residue at position 309 (W309) is a 7'-hydroxytryptophan. C-linked (Man) hydroxytryptophan glycosylation occurs at W309. The interval 322 to 377 (GHGYGGYGKPGKPGKPGSKGPRGPAGPPGATGKTGRTGATGKRGPPGYPGKPGVPG) is disordered. Residues 323-332 (HGYGGYGKPG) are compositionally biased toward gly residues. Residues 329 to 380 (GKPGKPGKPGSKGPRGPAGPPGATGKTGRTGATGKRGPPGYPGKPGVPGRNG) form the Collagen-like domain. Residues 336 to 366 (KPGSKGPRGPAGPPGATGKTGRTGATGKRGP) show a composition bias toward low complexity. 4-hydroxyproline occurs at positions 367, 370, and 376.

Produced by the byssal gland.

It is found in the secreted. In terms of biological role, provides adhesiveness to the mussel's foot. Mussels produce one of the strongest water insoluble glues. The mussel's adhesive is a bundle of threads, called a byssus, formed by a fibrous collagenous core coated with adhesive proteins. The sequence is that of Foot protein 1 variant 2 from Perna viridis (Asian green mussel).